The sequence spans 806 residues: Integrin beta-7 (806 aa).

The first 19 residues, Met1–Ser19, serve as a signal peptide directing secretion. Residues Glu20–Arg724 are Extracellular-facing. Positions Ser44–Pro92 constitute a PSI domain. Intrachain disulfides connect Cys51–Cys476, Cys54–Cys80, Cys64–Cys91, Cys216–Cys223, Cys271–Cys311, Cys412–Cys428, Cys448–Cys474, Cys478–Cys497, Cys488–Cys500, Cys502–Cys511, Cys513–Cys545, Cys527–Cys543, Cys537–Cys548, Cys550–Cys559, Cys561–Cys582, Cys566–Cys580, Cys574–Cys585, Cys587–Cys596, Cys598–Cys621, Cys605–Cys619, Cys613–Cys624, Cys626–Cys635, Cys638–Cys641, Cys645–Cys688, Cys651–Cys670, and Cys654–Cys666. Asn68 carries N-linked (GlcNAc...) asparagine glycosylation. Basic and acidic residues predominate over residues Glu98–Gln107. Residues Glu98–Leu123 are disordered. The VWFA domain maps to Tyr150–Leu389. Positions 161 and 163 each coordinate Mg(2+). Ca(2+) contacts are provided by Ser163, Asp166, Asp167, and Asp198. N-linked (GlcNAc...) asparagine glycosylation occurs at Asn250. The Ca(2+) site is built by Asn254, Asp256, Pro258, and Glu259. Glu259 is a binding site for Mg(2+). A glycan (N-linked (GlcNAc...) asparagine) is linked at Asn279. Positions 289 and 373 each coordinate Ca(2+). A glycan (N-linked (GlcNAc...) asparagine) is linked at Asn434. I-EGF domains are found at residues Cys478–Glu512, Cys513–Glu560, Cys561–Glu597, and Cys598–Asp636. Asn531 carries N-linked (GlcNAc...) asparagine glycosylation. N-linked (GlcNAc...) asparagine glycosylation occurs at Asn590. 2 N-linked (GlcNAc...) asparagine glycosylation sites follow: Asn665 and Asn674. Residues Ala725 to Tyr745 traverse the membrane as a helical segment. The Cytoplasmic segment spans residues Arg746 to Asp806. The interval Asn786–Asp806 is disordered.

Belongs to the integrin beta chain family. In terms of assembly, heterodimer of an alpha and a beta subunit. ITGB7/beta-7 associates with either ITGA4/alpha-4 or ITGAE/alpha-E. Integrin ITGA4/ITGB7 interacts with MADCAM1. Integrin ITGA4/ITGB7 interacts with VCAM1 and fibronectin. Interacts with FLNA (via filamin repeats 4, 9, 12, 17, 19, 21, and 23).

It is found in the cell membrane. In terms of biological role, integrin ITGA4/ITGB7 (alpha-4/beta-7) (Peyer patches-specific homing receptor LPAM-1) is an adhesion molecule that mediates lymphocyte migration and homing to gut-associated lymphoid tissue (GALT). Integrin ITGA4/ITGB7 interacts with the cell surface adhesion molecules MADCAM1 which is normally expressed by the vascular endothelium of the gastrointestinal tract. Also interacts with VCAM1 and fibronectin, an extracellular matrix component. It recognizes one or more domains within the alternatively spliced CS-1 region of fibronectin. Interactions involve the tripeptide L-D-T in MADCAM1, and L-D-V in fibronectin. Integrin ITGAE/ITGB7 (alpha-E/beta-7, HML-1) is a receptor for E-cadherin. The polypeptide is Integrin beta-7 (Itgb7) (Mus musculus (Mouse)).